The chain runs to 903 residues: Protein translocase subunit SecA (903 aa).

Residues Gln-87, 105–109 (GEGKT), and Asp-513 contribute to the ATP site. Positions 840–853 (MEAQRRAQAEEAAR) are enriched in basic and acidic residues. A disordered region spans residues 840–903 (MEAQRRAQAE…KYKQCHGQIN (64 aa)). Residues Cys-887, Cys-889, Cys-898, and His-899 each contribute to the Zn(2+) site.

It belongs to the SecA family. Monomer and homodimer. Part of the essential Sec protein translocation apparatus which comprises SecA, SecYEG and auxiliary proteins SecDF-YajC and YidC. The cofactor is Zn(2+).

Its subcellular location is the cell inner membrane. The protein resides in the cytoplasm. The enzyme catalyses ATP + H2O + cellular proteinSide 1 = ADP + phosphate + cellular proteinSide 2.. Functionally, part of the Sec protein translocase complex. Interacts with the SecYEG preprotein conducting channel. Has a central role in coupling the hydrolysis of ATP to the transfer of proteins into and across the cell membrane, serving both as a receptor for the preprotein-SecB complex and as an ATP-driven molecular motor driving the stepwise translocation of polypeptide chains across the membrane. This chain is Protein translocase subunit SecA, found in Vibrio cholerae serotype O1 (strain M66-2).